Here is a 700-residue protein sequence, read N- to C-terminus: Polyribonucleotide nucleotidyltransferase (700 aa).

2 residues coordinate Mg(2+): D487 and D493. The 60-residue stretch at 554–613 folds into the KH domain; sequence PRLLTIKIHPDKIRDVIGKGGSTIQAITKDTGTQIDIQDDGTIVIASVNNAAAREAKRRI. The S1 motif domain maps to 623–691; the sequence is GRIYEGKVAK…KQGRIRLSIK (69 aa).

This sequence belongs to the polyribonucleotide nucleotidyltransferase family. In terms of assembly, component of the RNA degradosome, which is a multiprotein complex involved in RNA processing and mRNA degradation. Mg(2+) is required as a cofactor.

It localises to the cytoplasm. The catalysed reaction is RNA(n+1) + phosphate = RNA(n) + a ribonucleoside 5'-diphosphate. In terms of biological role, involved in mRNA degradation. Catalyzes the phosphorolysis of single-stranded polyribonucleotides processively in the 3'- to 5'-direction. In Xylella fastidiosa (strain M12), this protein is Polyribonucleotide nucleotidyltransferase.